The primary structure comprises 220 residues: UPF0319 protein YccT (220 aa).

Residues 1 to 20 (MKTGALATFLALCLPATVFA) form the signal peptide.

It belongs to the UPF0319 family.

This Salmonella heidelberg (strain SL476) protein is UPF0319 protein YccT.